Reading from the N-terminus, the 271-residue chain is MSKRLLLFDFDETYFKHNTNEEDLSHLREMEKLLEKLTNNNEVITAVLTGSTFQSVMDKMDQVNMTFKPLHIFSDLSSKMFTWNNGEYVESETYKKKVLSEPFLFEDIEDILRHISAQYNVEFIPQRAFEGNETHYNFYFHSTGNHNNDSRILEALVRYANDQNYTARFSRSNPLAGDPENAYDIDFTPSNAGKLYATQFLMRKYNIPVKSILGFGDSGNDEAYLSYLEHAYLMSNSRDEALKQKFRLTKYPYYQGITLHVKEFVEGKYDY.

It belongs to the HAD-like hydrolase superfamily.

This is an uncharacterized protein from Staphylococcus aureus (strain NCTC 8325 / PS 47).